A 206-amino-acid chain; its full sequence is uncharacterized protein (206 aa).

The chain crosses the membrane as a helical span at residues 166-186 (FYTGLSVIVGGATALALGLFF).

It localises to the membrane. This is an uncharacterized protein from Dictyostelium discoideum (Social amoeba).